A 338-amino-acid chain; its full sequence is MTTLRLLISDSYDPWFNLAVEECIFRQMPATQRVLFLWRNADTVVIGRAQNPWKECNTRRMEEDNVRLARRSSGGGAVFHDLGNTCFTFMAGKPEYDKTISTHIVLAALNSLGVMADASGRNDLVVKTPDGDRKVSGSAYRETKDRGFHHGTLLLNADLSRLANYLNPDKKKLAAKGITSVRSRVANLTELLPGITHEQVCQAVTEAFFAHYGERVDAEVISPDKTPDLPNFAETFARQSSWEWNFGQAPAFSHLLDERFTWGGVELHFDVEKGVITRAQVFTDSLNPAPLEALGERLQGCQYRVDVLEQACESLIAEFPAQKGELRELAAWMAQAVR.

Residues 29 to 216 enclose the BPL/LPL catalytic domain; that stretch reads PATQRVLFLW…AFFAHYGERV (188 aa). ATP is bound by residues Arg-71, 76-79, and Lys-134; that span reads GAVF. Lys-134 contributes to the (R)-lipoate binding site.

Belongs to the LplA family. Monomer.

The protein localises to the cytoplasm. It carries out the reaction L-lysyl-[lipoyl-carrier protein] + (R)-lipoate + ATP = N(6)-[(R)-lipoyl]-L-lysyl-[lipoyl-carrier protein] + AMP + diphosphate + H(+). It functions in the pathway protein modification; protein lipoylation via exogenous pathway; protein N(6)-(lipoyl)lysine from lipoate: step 1/2. The protein operates within protein modification; protein lipoylation via exogenous pathway; protein N(6)-(lipoyl)lysine from lipoate: step 2/2. In terms of biological role, catalyzes both the ATP-dependent activation of exogenously supplied lipoate to lipoyl-AMP and the transfer of the activated lipoyl onto the lipoyl domains of lipoate-dependent enzymes. The sequence is that of Lipoate-protein ligase A from Salmonella dublin (strain CT_02021853).